Here is a 94-residue protein sequence, read N- to C-terminus: Co-chaperonin GroES (94 aa).

Belongs to the GroES chaperonin family. Heptamer of 7 subunits arranged in a ring. Interacts with the chaperonin GroEL.

The protein resides in the cytoplasm. Functionally, together with the chaperonin GroEL, plays an essential role in assisting protein folding. The GroEL-GroES system forms a nano-cage that allows encapsulation of the non-native substrate proteins and provides a physical environment optimized to promote and accelerate protein folding. GroES binds to the apical surface of the GroEL ring, thereby capping the opening of the GroEL channel. The sequence is that of Co-chaperonin GroES from Clostridium botulinum (strain Eklund 17B / Type B).